The chain runs to 284 residues: Phosphoribosylaminoimidazole-succinocarboxamide synthase (284 aa).

This sequence belongs to the SAICAR synthetase family.

It carries out the reaction 5-amino-1-(5-phospho-D-ribosyl)imidazole-4-carboxylate + L-aspartate + ATP = (2S)-2-[5-amino-1-(5-phospho-beta-D-ribosyl)imidazole-4-carboxamido]succinate + ADP + phosphate + 2 H(+). It participates in purine metabolism; IMP biosynthesis via de novo pathway; 5-amino-1-(5-phospho-D-ribosyl)imidazole-4-carboxamide from 5-amino-1-(5-phospho-D-ribosyl)imidazole-4-carboxylate: step 1/2. The chain is Phosphoribosylaminoimidazole-succinocarboxamide synthase from Chromobacterium violaceum (strain ATCC 12472 / DSM 30191 / JCM 1249 / CCUG 213 / NBRC 12614 / NCIMB 9131 / NCTC 9757 / MK).